We begin with the raw amino-acid sequence, 115 residues long: NADH-ubiquinone oxidoreductase chain 3 (115 aa).

Helical transmembrane passes span 4 to 24 (LMAL…AFWL), 55 to 75 (FFLV…LLPL), and 86 to 106 (TMML…AYEW).

Belongs to the complex I subunit 3 family. As to quaternary structure, core subunit of respiratory chain NADH dehydrogenase (Complex I) which is composed of 45 different subunits. Interacts with TMEM186. Interacts with TMEM242.

It localises to the mitochondrion inner membrane. It carries out the reaction a ubiquinone + NADH + 5 H(+)(in) = a ubiquinol + NAD(+) + 4 H(+)(out). Core subunit of the mitochondrial membrane respiratory chain NADH dehydrogenase (Complex I) which catalyzes electron transfer from NADH through the respiratory chain, using ubiquinone as an electron acceptor. Essential for the catalytic activity of complex I. The sequence is that of NADH-ubiquinone oxidoreductase chain 3 from Peromyscus gossypinus (Cotton deermouse).